A 409-amino-acid polypeptide reads, in one-letter code: tRNA-specific 2-thiouridylase MnmA (409 aa).

Residues 20-27 (AMSGGVDS) and Leu46 contribute to the ATP site. The active-site Nucleophile is Cys114. Cys114 and Cys210 are disulfide-bonded. ATP is bound at residue Gly138. The segment at 160-162 (RDQ) is interaction with tRNA. Cys210 functions as the Cysteine persulfide intermediate in the catalytic mechanism.

This sequence belongs to the MnmA/TRMU family.

The protein localises to the cytoplasm. It carries out the reaction S-sulfanyl-L-cysteinyl-[protein] + uridine(34) in tRNA + AH2 + ATP = 2-thiouridine(34) in tRNA + L-cysteinyl-[protein] + A + AMP + diphosphate + H(+). Its function is as follows. Catalyzes the 2-thiolation of uridine at the wobble position (U34) of tRNA, leading to the formation of s(2)U34. This chain is tRNA-specific 2-thiouridylase MnmA, found in Bartonella henselae (strain ATCC 49882 / DSM 28221 / CCUG 30454 / Houston 1) (Rochalimaea henselae).